The primary structure comprises 999 residues: Ulvan lyase, long isoform (999 aa).

Residues 1-21 (MKCLKTLLVSTTLLGAFSLNA) form the signal peptide. 126-127 (SH) is a substrate binding site. His127 functions as the Proton donor/acceptor in the catalytic mechanism. The Ca(2+) site is built by Asp189, Asp199, and Lys201. Residues Tyr280 and Arg297 each coordinate substrate. Ca(2+) contacts are provided by Asp300, Asp303, and Tyr305. Residue Tyr361 coordinates substrate.

This sequence belongs to the polysaccharide lyase 24 family.

In terms of biological role, ulvan lyase involved in ulvan degradation. Ulvan is the main polysaccharide component of the Ulvales (green seaweed) cell wall. It is composed of disaccharide building blocks comprising 3-sulfated rhamnose (Rha3S) linked to D-glucuronic acid (GlcA), L-iduronic acid (IduA), or D-xylose (Xyl). Ulvan lyase catalyzes preferentially the endolytic cleavage of the glycosidic bond between Rha3S and the uronic acid GlcA, but not IduA, producing oligosaccharides that have unsaturated 4-deoxy-L-threo-hex-4-enopyranosiduronic acid (deltaUA) at the non-reducing end. The most abundant end products in the degradation of the ulvan polysaccharide were deltaUA-Rha3S disaccharides and deltaUA-Rha3S-IduA-Rha3S and deltaUA-Rha3S-Xyl-Rha3S tetrasaccharides. The polypeptide is Ulvan lyase, long isoform (Alteromonas sp).